The following is a 203-amino-acid chain: V-type ATP synthase subunit D (203 aa).

The protein belongs to the V-ATPase D subunit family.

Its function is as follows. Produces ATP from ADP in the presence of a proton gradient across the membrane. This Streptococcus pneumoniae (strain Hungary19A-6) protein is V-type ATP synthase subunit D.